Consider the following 248-residue polypeptide: tRNA pseudouridine synthase A 2 (248 aa).

The active-site Nucleophile is the Asp-55. Tyr-113 provides a ligand contact to substrate.

Belongs to the tRNA pseudouridine synthase TruA family. As to quaternary structure, homodimer.

It carries out the reaction uridine(38/39/40) in tRNA = pseudouridine(38/39/40) in tRNA. Functionally, formation of pseudouridine at positions 38, 39 and 40 in the anticodon stem and loop of transfer RNAs. This Clostridium tetani (strain Massachusetts / E88) protein is tRNA pseudouridine synthase A 2.